The following is a 389-amino-acid chain: NAD-dependent protein deacetylase sirtuin-2 (389 aa).

The tract at residues 1-34 (MAEPDPSHPLETQAGKVQEAQDSDSDSEGGAAGG) is disordered. Ala2 bears the N-acetylalanine mark. Phosphoserine is present on residues Ser23, Ser25, and Ser27. A Nuclear export signal motif is present at residues 41 to 51 (LRNLFSQTLSL). Phosphoserine is present on Ser53. In terms of domain architecture, Deacetylase sirtuin-type spans 57–338 (RLLDELTLEG…LALAELLGWK (282 aa)). Residues 85 to 89 (AGIST) and 95 to 97 (DFR) each bind NAD(+). Ser100 bears the Phosphoserine mark. 167–170 (QNID) contacts NAD(+). His187 acts as the Proton acceptor in catalysis. Residues Cys195 and Cys200 each coordinate Zn(2+). Ser207 is modified (phosphoserine). Residues Cys221 and Cys224 each contribute to the Zn(2+) site. Residues 262 to 263 (TS), 286 to 288 (NKE), and Cys324 contribute to the NAD(+) site. The tract at residues 351 to 389 (SIDAQSGAGVPNPSTSASPKKSPPPAKDEARTTEREKPQ) is disordered. Positions 361-370 (PNPSTSASPK) are enriched in low complexity. Ser368 is modified (phosphoserine; by CDK2 and CDK5). Ser372 carries the post-translational modification Phosphoserine. The segment covering 376–389 (AKDEARTTEREKPQ) has biased composition (basic and acidic residues).

Belongs to the sirtuin family. Class I subfamily. Interacts with CDC20, FOXO3 and FZR1. Associates with microtubules in primary cortical mature neurons. Homotrimer. Isoform 1 and isoform 2 interact (via both phosphorylated, unphosphorylated, active or inactive forms) with HDAC6; the interaction is necessary for the complex to interact with alpha-tubulin, suggesting that these proteins belong to a large complex that deacetylates the cytoskeleton. Interacts with FOXO1; the interaction is disrupted upon serum-starvation or oxidative stress, leading to increased level of acetylated FOXO1 and induction of autophagy. Interacts with RELA; the interaction occurs in the cytoplasm and is increased in a TNF-alpha-dependent manner. Interacts with HOXA10; the interaction is direct. Interacts with YWHAB and YWHAG; the interactions occur in a AKT-dependent manner and increase SIRT2-dependent TP53 deacetylation. Interacts with MAPK1/ERK2 and MAPK3/ERK1; the interactions increase SIRT2 stability and deacetylation activity. Interacts (phosphorylated form) with KMT5A isoform 2; the interaction is direct, stimulates KMT5A-mediated methyltransferase activity on histone at 'Lys-20' (H4K20me1) and is increased in a H(2)O(2)-induced oxidative stress-dependent manner. Interacts with G6PD; the interaction is enhanced by H(2)O(2) treatment. Interacts with a G1/S-specific cyclin E-CDK2 complex. Interacts with AURKA, CDK5R1 (p35 form) and CDK5 and HIF1A. Isoform 1, isoform 2 and isoform 5 interact (via C-terminus region) with EP300. Interacts with the tRNA ligase SARS1; recruited to the VEGFA promoter via interaction with SARS1. Interacts with BEX4; negatively regulates alpha-tubulin deacetylation by SIRT2. Zn(2+) is required as a cofactor. Phosphorylated at phosphoserine and phosphothreonine. Phosphorylated at Ser-368 by a mitotic kinase CDK1/cyclin B at the G2/M transition; phosphorylation regulates the delay in cell-cycle progression. Phosphorylated at Ser-368 by a mitotic kinase G1/S-specific cyclin E/Cdk2 complex; phosphorylation inactivates SIRT2-mediated alpha-tubulin deacetylation and thereby negatively regulates cell adhesion, cell migration and neurite outgrowth during neuronal differentiation. Phosphorylated by cyclin A/Cdk2 and p35-Cdk5 complexes and to a lesser extent by the cyclin D3/Cdk4 and cyclin B/Cdk1, in vitro. Dephosphorylated at Ser-368 by CDC14A and CDC14B around early anaphase. Post-translationally, acetylated by EP300; acetylation leads both to the decreased of SIRT2-mediated alpha-tubulin deacetylase activity and SIRT2-mediated down-regulation of TP53 transcriptional activity. In terms of processing, ubiquitinated. Isoform 1 is expressed in heart, liver and skeletal muscle, weakly expressed in the cortex. Isoform 2 is strongly expressed in the cortex, weakly expressed in heart and liver. Weakly expressed in several malignancies including breast, liver, brain, kidney and prostate cancers compared to normal tissues. Weakly expressed in glioma cell lines compared to normal brain tissues (at protein level). Widely expressed. Highly expressed in heart, brain and skeletal muscle, while it is weakly expressed in placenta and lung. Down-regulated in many gliomas suggesting that it may act as a tumor suppressor gene in human gliomas possibly through the regulation of microtubule network.

It is found in the nucleus. The protein localises to the cytoplasm. It localises to the perinuclear region. The protein resides in the cytoskeleton. Its subcellular location is the microtubule organizing center. It is found in the centrosome. The protein localises to the centriole. It localises to the spindle. The protein resides in the midbody. Its subcellular location is the chromosome. It is found in the perikaryon. The protein localises to the cell projection. It localises to the growth cone. The protein resides in the myelin membrane. It catalyses the reaction N(6)-acetyl-L-lysyl-[protein] + NAD(+) + H2O = 2''-O-acetyl-ADP-D-ribose + nicotinamide + L-lysyl-[protein]. The catalysed reaction is N(6)-tetradecanoyl-L-lysyl-[protein] + NAD(+) + H2O = 2''-O-tetradecanoyl-ADP-D-ribose + nicotinamide + L-lysyl-[protein]. The enzyme catalyses N(6)-hexadecanoyl-L-lysyl-[protein] + NAD(+) + H2O = 2''-O-hexadecanoyl-ADP-D-ribose + nicotinamide + L-lysyl-[protein]. Inhibited by Sirtinol, A3 and M15 small molecules. Inhibited by nicotinamide. Inhibited by a macrocyclic peptide inhibitor S2iL5. Inhibited by EP300-induced acetylation. Its function is as follows. NAD-dependent protein deacetylase, which deacetylates internal lysines on histone and alpha-tubulin as well as many other proteins such as key transcription factors. Participates in the modulation of multiple and diverse biological processes such as cell cycle control, genomic integrity, microtubule dynamics, cell differentiation, metabolic networks, and autophagy. Plays a major role in the control of cell cycle progression and genomic stability. Functions in the antephase checkpoint preventing precocious mitotic entry in response to microtubule stress agents, and hence allowing proper inheritance of chromosomes. Positively regulates the anaphase promoting complex/cyclosome (APC/C) ubiquitin ligase complex activity by deacetylating CDC20 and FZR1, then allowing progression through mitosis. Associates both with chromatin at transcriptional start sites (TSSs) and enhancers of active genes. Plays a role in cell cycle and chromatin compaction through epigenetic modulation of the regulation of histone H4 'Lys-20' methylation (H4K20me1) during early mitosis. Specifically deacetylates histone H4 at 'Lys-16' (H4K16ac) between the G2/M transition and metaphase enabling H4K20me1 deposition by KMT5A leading to ulterior levels of H4K20me2 and H4K20me3 deposition throughout cell cycle, and mitotic S-phase progression. Deacetylates KMT5A modulating KMT5A chromatin localization during the mitotic stress response. Also deacetylates histone H3 at 'Lys-57' (H3K56ac) during the mitotic G2/M transition. Upon bacterium Listeria monocytogenes infection, deacetylates 'Lys-18' of histone H3 in a receptor tyrosine kinase MET- and PI3K/Akt-dependent manner, thereby inhibiting transcriptional activity and promoting late stages of listeria infection. During oocyte meiosis progression, may deacetylate histone H4 at 'Lys-16' (H4K16ac) and alpha-tubulin, regulating spindle assembly and chromosome alignment by influencing microtubule dynamics and kinetochore function. Deacetylates histone H4 at 'Lys-16' (H4K16ac) at the VEGFA promoter and thereby contributes to regulate expression of VEGFA, a key regulator of angiogenesis. Deacetylates alpha-tubulin at 'Lys-40' and hence controls neuronal motility, oligodendroglial cell arbor projection processes and proliferation of non-neuronal cells. Phosphorylation at Ser-368 by a G1/S-specific cyclin E-CDK2 complex inactivates SIRT2-mediated alpha-tubulin deacetylation, negatively regulating cell adhesion, cell migration and neurite outgrowth during neuronal differentiation. Deacetylates PARD3 and participates in the regulation of Schwann cell peripheral myelination formation during early postnatal development and during postinjury remyelination. Involved in several cellular metabolic pathways. Plays a role in the regulation of blood glucose homeostasis by deacetylating and stabilizing phosphoenolpyruvate carboxykinase PCK1 activity in response to low nutrient availability. Acts as a key regulator in the pentose phosphate pathway (PPP) by deacetylating and activating the glucose-6-phosphate G6PD enzyme, and therefore, stimulates the production of cytosolic NADPH to counteract oxidative damage. Maintains energy homeostasis in response to nutrient deprivation as well as energy expenditure by inhibiting adipogenesis and promoting lipolysis. Attenuates adipocyte differentiation by deacetylating and promoting FOXO1 interaction to PPARG and subsequent repression of PPARG-dependent transcriptional activity. Plays a role in the regulation of lysosome-mediated degradation of protein aggregates by autophagy in neuronal cells. Deacetylates FOXO1 in response to oxidative stress or serum deprivation, thereby negatively regulating FOXO1-mediated autophagy. Deacetylates a broad range of transcription factors and co-regulators regulating target gene expression. Deacetylates transcriptional factor FOXO3 stimulating the ubiquitin ligase SCF(SKP2)-mediated FOXO3 ubiquitination and degradation. Deacetylates HIF1A and therefore promotes HIF1A degradation and inhibition of HIF1A transcriptional activity in tumor cells in response to hypoxia. Deacetylates RELA in the cytoplasm inhibiting NF-kappaB-dependent transcription activation upon TNF-alpha stimulation. Inhibits transcriptional activation by deacetylating p53/TP53 and EP300. Also deacetylates EIF5A. Functions as a negative regulator on oxidative stress-tolerance in response to anoxia-reoxygenation conditions. Plays a role as tumor suppressor. In addition to protein deacetylase activity, also has activity toward long-chain fatty acyl groups and mediates protein-lysine demyristoylation and depalmitoylation of target proteins, such as ARF6 and KRAS, thereby regulating their association with membranes. Functionally, deacetylates EP300, alpha-tubulin and histone H3 and H4. In terms of biological role, lacks deacetylation activity, at least toward known SIRT2 targets. In Homo sapiens (Human), this protein is NAD-dependent protein deacetylase sirtuin-2 (SIRT2).